The primary structure comprises 232 residues: Phosphatidylserine decarboxylase proenzyme (232 aa).

Residue Ser-190 is the Schiff-base intermediate with substrate; via pyruvic acid of the active site. Ser-190 carries the pyruvic acid (Ser); by autocatalysis modification.

This sequence belongs to the phosphatidylserine decarboxylase family. PSD-A subfamily. As to quaternary structure, heterodimer of a large membrane-associated beta subunit and a small pyruvoyl-containing alpha subunit. Requires pyruvate as cofactor. In terms of processing, is synthesized initially as an inactive proenzyme. Formation of the active enzyme involves a self-maturation process in which the active site pyruvoyl group is generated from an internal serine residue via an autocatalytic post-translational modification. Two non-identical subunits are generated from the proenzyme in this reaction, and the pyruvate is formed at the N-terminus of the alpha chain, which is derived from the carboxyl end of the proenzyme. The post-translation cleavage follows an unusual pathway, termed non-hydrolytic serinolysis, in which the side chain hydroxyl group of the serine supplies its oxygen atom to form the C-terminus of the beta chain, while the remainder of the serine residue undergoes an oxidative deamination to produce ammonia and the pyruvoyl prosthetic group on the alpha chain.

The protein resides in the cell membrane. It catalyses the reaction a 1,2-diacyl-sn-glycero-3-phospho-L-serine + H(+) = a 1,2-diacyl-sn-glycero-3-phosphoethanolamine + CO2. It participates in phospholipid metabolism; phosphatidylethanolamine biosynthesis; phosphatidylethanolamine from CDP-diacylglycerol: step 2/2. Its function is as follows. Catalyzes the formation of phosphatidylethanolamine (PtdEtn) from phosphatidylserine (PtdSer). The protein is Phosphatidylserine decarboxylase proenzyme of Afipia carboxidovorans (strain ATCC 49405 / DSM 1227 / KCTC 32145 / OM5) (Oligotropha carboxidovorans).